The primary structure comprises 128 residues: Aspartate 1-decarboxylase (128 aa).

The active-site Schiff-base intermediate with substrate; via pyruvic acid is the serine 25. Serine 25 carries the post-translational modification Pyruvic acid (Ser). Threonine 57 is a binding site for substrate. The active-site Proton donor is tyrosine 58. Residue 73 to 75 coordinates substrate; that stretch reads GAA.

This sequence belongs to the PanD family. In terms of assembly, heterooctamer of four alpha and four beta subunits. Requires pyruvate as cofactor. In terms of processing, is synthesized initially as an inactive proenzyme, which is activated by self-cleavage at a specific serine bond to produce a beta-subunit with a hydroxyl group at its C-terminus and an alpha-subunit with a pyruvoyl group at its N-terminus.

The protein resides in the cytoplasm. The enzyme catalyses L-aspartate + H(+) = beta-alanine + CO2. The protein operates within cofactor biosynthesis; (R)-pantothenate biosynthesis; beta-alanine from L-aspartate: step 1/1. Functionally, catalyzes the pyruvoyl-dependent decarboxylation of aspartate to produce beta-alanine. This Chlorobium luteolum (strain DSM 273 / BCRC 81028 / 2530) (Pelodictyon luteolum) protein is Aspartate 1-decarboxylase.